Here is a 180-residue protein sequence, read N- to C-terminus: Small ribosomal subunit protein uS5 (180 aa).

The segment at 1–20 (MAKMQGRMQGKVAPGDDRGD) is disordered. In terms of domain architecture, S5 DRBM spans 22–85 (LKEKMVAINR…DEARRKMIKV (64 aa)).

It belongs to the universal ribosomal protein uS5 family. Part of the 30S ribosomal subunit. Contacts proteins S4 and S8.

Functionally, with S4 and S12 plays an important role in translational accuracy. Its function is as follows. Located at the back of the 30S subunit body where it stabilizes the conformation of the head with respect to the body. The chain is Small ribosomal subunit protein uS5 from Nitrosospira multiformis (strain ATCC 25196 / NCIMB 11849 / C 71).